Here is a 455-residue protein sequence, read N- to C-terminus: Bifunctional protein GlmU (455 aa).

The interval 1-226 (MSLDIVILAA…AMEVQGANDR (226 aa)) is pyrophosphorylase. Residues 8–11 (LAAG), Lys22, Gln73, 78–79 (GT), 99–101 (YGD), Gly136, Glu151, Asn166, and Asn224 each bind UDP-N-acetyl-alpha-D-glucosamine. Asp101 contributes to the Mg(2+) binding site. Residue Asn224 participates in Mg(2+) binding. The linker stretch occupies residues 227 to 247 (RQLSELERHYQLREGRRLMAQ). Residues 248-455 (GVTLRDPARF…WKRPEKIKKS (208 aa)) form an N-acetyltransferase region. Residues Arg330 and Lys348 each coordinate UDP-N-acetyl-alpha-D-glucosamine. The active-site Proton acceptor is the His360. UDP-N-acetyl-alpha-D-glucosamine contacts are provided by Tyr363 and Asn374. Residues Ala377, 383-384 (NY), Ser402, Ala420, and Arg437 each bind acetyl-CoA.

In the N-terminal section; belongs to the N-acetylglucosamine-1-phosphate uridyltransferase family. It in the C-terminal section; belongs to the transferase hexapeptide repeat family. Homotrimer. Mg(2+) serves as cofactor.

The protein localises to the cytoplasm. It carries out the reaction alpha-D-glucosamine 1-phosphate + acetyl-CoA = N-acetyl-alpha-D-glucosamine 1-phosphate + CoA + H(+). The enzyme catalyses N-acetyl-alpha-D-glucosamine 1-phosphate + UTP + H(+) = UDP-N-acetyl-alpha-D-glucosamine + diphosphate. It participates in nucleotide-sugar biosynthesis; UDP-N-acetyl-alpha-D-glucosamine biosynthesis; N-acetyl-alpha-D-glucosamine 1-phosphate from alpha-D-glucosamine 6-phosphate (route II): step 2/2. It functions in the pathway nucleotide-sugar biosynthesis; UDP-N-acetyl-alpha-D-glucosamine biosynthesis; UDP-N-acetyl-alpha-D-glucosamine from N-acetyl-alpha-D-glucosamine 1-phosphate: step 1/1. Its pathway is bacterial outer membrane biogenesis; LPS lipid A biosynthesis. Functionally, catalyzes the last two sequential reactions in the de novo biosynthetic pathway for UDP-N-acetylglucosamine (UDP-GlcNAc). The C-terminal domain catalyzes the transfer of acetyl group from acetyl coenzyme A to glucosamine-1-phosphate (GlcN-1-P) to produce N-acetylglucosamine-1-phosphate (GlcNAc-1-P), which is converted into UDP-GlcNAc by the transfer of uridine 5-monophosphate (from uridine 5-triphosphate), a reaction catalyzed by the N-terminal domain. The polypeptide is Bifunctional protein GlmU (Pseudomonas putida (strain ATCC 700007 / DSM 6899 / JCM 31910 / BCRC 17059 / LMG 24140 / F1)).